Here is a 435-residue protein sequence, read N- to C-terminus: Chaperone SurA (435 aa).

The first 29 residues, 1–29 (MINKTLHTKHTLLGLLAMAVLMIPVWSQA), serve as a signal peptide directing secretion. 2 PpiC domains span residues 180-281 (QEDF…KMID) and 290-390 (VTQY…RVDD).

Its subcellular location is the periplasm. The enzyme catalyses [protein]-peptidylproline (omega=180) = [protein]-peptidylproline (omega=0). Functionally, chaperone involved in the correct folding and assembly of outer membrane proteins. Recognizes specific patterns of aromatic residues and the orientation of their side chains, which are found more frequently in integral outer membrane proteins. May act in both early periplasmic and late outer membrane-associated steps of protein maturation. The protein is Chaperone SurA of Alcanivorax borkumensis (strain ATCC 700651 / DSM 11573 / NCIMB 13689 / SK2).